The sequence spans 291 residues: ATP synthase gamma chain (291 aa).

Belongs to the ATPase gamma chain family. F-type ATPases have 2 components, CF(1) - the catalytic core - and CF(0) - the membrane proton channel. CF(1) has five subunits: alpha(3), beta(3), gamma(1), delta(1), epsilon(1). CF(0) has three main subunits: a, b and c.

It localises to the cell inner membrane. Its function is as follows. Produces ATP from ADP in the presence of a proton gradient across the membrane. The gamma chain is believed to be important in regulating ATPase activity and the flow of protons through the CF(0) complex. This Chlorobium limicola (strain DSM 245 / NBRC 103803 / 6330) protein is ATP synthase gamma chain.